Consider the following 221-residue polypeptide: U1 small nuclear ribonucleoprotein C (221 aa).

Residues 4–36 (YFCDYCDTYLTHDSPSVRKTHCNGRKHKENVRV) form a Matrin-type zinc finger. A disordered region spans residues 100-168 (SNPFPTSQAG…PPGAPTLPQP (69 aa)). Residues 134 to 166 (APAPPRMPGPLLMTPPPGAAAPGMAPPGAPTLP) are compositionally biased toward pro residues.

The protein belongs to the U1 small nuclear ribonucleoprotein C family. As to quaternary structure, U1 snRNP is composed of the 7 core Sm proteins B/B', D1, D2, D3, E, F and G that assemble in a heptameric protein ring on the Sm site of the small nuclear RNA to form the core snRNP, and at least 3 U1 snRNP-specific proteins U1-70K, U1-A and U1-C. U1-C interacts with U1 snRNA and the 5' splice-site region of the pre-mRNA.

It localises to the nucleus. Functionally, component of the spliceosomal U1 snRNP, which is essential for recognition of the pre-mRNA 5' splice-site and the subsequent assembly of the spliceosome. U1-C is directly involved in initial 5' splice-site recognition for both constitutive and regulated alternative splicing. The interaction with the 5' splice-site seems to precede base-pairing between the pre-mRNA and the U1 snRNA. Stimulates commitment or early (E) complex formation by stabilizing the base pairing of the 5' end of the U1 snRNA and the 5' splice-site region. The sequence is that of U1 small nuclear ribonucleoprotein C from Branchiostoma floridae (Florida lancelet).